A 260-amino-acid chain; its full sequence is Adenosylcobinamide-GDP ribazoletransferase (260 aa).

Helical transmembrane passes span 7–27 (WYFLWGGDSVGAAILFYTRLP), 45–65 (LMGLLLSLILLALDRGLHWLG), 117–137 (AYGVMAIAVVLLLKTFALASF), 145–165 (WALIMALGWGRWGQLLAIALY), 187–207 (LLLGTMIIVFGGVGMGYALAI), and 210–230 (WLILGATGSSALIAWAVGRWF).

It belongs to the CobS family. Mg(2+) is required as a cofactor.

Its subcellular location is the cell inner membrane. It catalyses the reaction alpha-ribazole + adenosylcob(III)inamide-GDP = adenosylcob(III)alamin + GMP + H(+). The enzyme catalyses alpha-ribazole 5'-phosphate + adenosylcob(III)inamide-GDP = adenosylcob(III)alamin 5'-phosphate + GMP + H(+). It participates in cofactor biosynthesis; adenosylcobalamin biosynthesis; adenosylcobalamin from cob(II)yrinate a,c-diamide: step 7/7. Joins adenosylcobinamide-GDP and alpha-ribazole to generate adenosylcobalamin (Ado-cobalamin). Also synthesizes adenosylcobalamin 5'-phosphate from adenosylcobinamide-GDP and alpha-ribazole 5'-phosphate. The sequence is that of Adenosylcobinamide-GDP ribazoletransferase from Synechocystis sp. (strain ATCC 27184 / PCC 6803 / Kazusa).